The following is a 227-amino-acid chain: MTAIAPVITIDGPSGAGKGTLCKAMAEALQWHLLDSGAIYRVLALAALHHHVDVTSEDALVPLASHLDVRFVSTNGNLEVILEGEDVSGEIRTQEVANAASQVAAFPRVREALLRRQRAFRDAPGLIADGRDMGTVVFPDAPVKIFLDASSEERAHRRMLQLQEKGFSVNFERLLAEIKERDDRDRNRAVAPLVPAADALVLDSTRLSIEQVIEKALQYARQKLALA.

12-20 (GPSGAGKGT) contacts ATP.

The protein belongs to the cytidylate kinase family. Type 1 subfamily.

Its subcellular location is the cytoplasm. It catalyses the reaction CMP + ATP = CDP + ADP. It carries out the reaction dCMP + ATP = dCDP + ADP. This is Cytidylate kinase from Citrobacter koseri (strain ATCC BAA-895 / CDC 4225-83 / SGSC4696).